A 154-amino-acid chain; its full sequence is Histone H2B.5 (154 aa).

A compositionally biased stretch (basic and acidic residues) spans 1-25 (MAPKAEKKPAAKKVAEEEPSEKAAP). The tract at residues 1–62 (MAPKAEKKPA…DKKGRKKAKK (62 aa)) is disordered. 2 positions are modified to N6-acetyllysine: Lys-7 and Lys-39. A Glycyl lysine isopeptide (Lys-Gly) (interchain with G-Cter in ubiquitin) cross-link involves residue Lys-150.

Belongs to the histone H2B family. In terms of assembly, the nucleosome is a histone octamer containing two molecules each of H2A, H2B, H3 and H4 assembled in one H3-H4 heterotetramer and two H2A-H2B heterodimers. The octamer wraps approximately 147 bp of DNA. Post-translationally, can be acetylated to form H2BK6ac and H2BK33ac. Monoubiquitinated to form H2BK143ub1; may give a specific tag for epigenetic transcriptional activation.

Its subcellular location is the nucleus. The protein resides in the chromosome. Its function is as follows. Core component of nucleosome. Nucleosomes wrap and compact DNA into chromatin, limiting DNA accessibility to the cellular machineries which require DNA as a template. Histones thereby play a central role in transcription regulation, DNA repair, DNA replication and chromosomal stability. DNA accessibility is regulated via a complex set of post-translational modifications of histones, also called histone code, and nucleosome remodeling. The protein is Histone H2B.5 of Zea mays (Maize).